A 280-amino-acid polypeptide reads, in one-letter code: Protein synthesis inhibitor II (280 aa).

N-acetylalanine is present on A1. E174 is an active-site residue.

It belongs to the ribosome-inactivating protein family. Type 1 RIP subfamily.

The protein resides in the cytoplasm. The catalysed reaction is Endohydrolysis of the N-glycosidic bond at one specific adenosine on the 28S rRNA.. Its function is as follows. Inhibits the elongation phase of protein synthesis. It inactivates fungal ribosomes even more effectively than mammalian ribosomes and is thought to function as a constitutive antifungal agent in plants. This Hordeum vulgare (Barley) protein is Protein synthesis inhibitor II (RIP30A).